The chain runs to 69 residues: Protein transport protein Sec61 subunit gamma (69 aa).

The Cytoplasmic portion of the chain corresponds to 1–40; it reads MDILEETAAPLKDFAKNSIRLFKKCTKPDAQEFQKIALAT. A helical transmembrane segment spans residues 41-61; it reads LIGFAIMGFIGFFVKLIHIPI. The Extracellular segment spans residues 62–69; it reads NNILVGGV.

The protein belongs to the SecE/SEC61-gamma family. In terms of assembly, heterotrimeric complex composed of SEC61-alpha, SEC61-beta and SEC61-gamma.

The protein localises to the endoplasmic reticulum membrane. Its function is as follows. Necessary for protein translocation in the endoplasmic reticulum. In Dictyostelium discoideum (Social amoeba), this protein is Protein transport protein Sec61 subunit gamma (sec61g).